We begin with the raw amino-acid sequence, 164 residues long: Crossover junction endodeoxyribonuclease RuvC (164 aa).

Residues Asp-7, Glu-67, and Asp-139 contribute to the active site. Mg(2+) contacts are provided by Asp-7, Glu-67, and Asp-139.

This sequence belongs to the RuvC family. As to quaternary structure, homodimer which binds Holliday junction (HJ) DNA. The HJ becomes 2-fold symmetrical on binding to RuvC with unstacked arms; it has a different conformation from HJ DNA in complex with RuvA. In the full resolvosome a probable DNA-RuvA(4)-RuvB(12)-RuvC(2) complex forms which resolves the HJ. Requires Mg(2+) as cofactor.

The protein resides in the cytoplasm. It catalyses the reaction Endonucleolytic cleavage at a junction such as a reciprocal single-stranded crossover between two homologous DNA duplexes (Holliday junction).. Its function is as follows. The RuvA-RuvB-RuvC complex processes Holliday junction (HJ) DNA during genetic recombination and DNA repair. Endonuclease that resolves HJ intermediates. Cleaves cruciform DNA by making single-stranded nicks across the HJ at symmetrical positions within the homologous arms, yielding a 5'-phosphate and a 3'-hydroxyl group; requires a central core of homology in the junction. The consensus cleavage sequence is 5'-(A/T)TT(C/G)-3'. Cleavage occurs on the 3'-side of the TT dinucleotide at the point of strand exchange. HJ branch migration catalyzed by RuvA-RuvB allows RuvC to scan DNA until it finds its consensus sequence, where it cleaves and resolves the cruciform DNA. In Geobacter metallireducens (strain ATCC 53774 / DSM 7210 / GS-15), this protein is Crossover junction endodeoxyribonuclease RuvC.